A 913-amino-acid polypeptide reads, in one-letter code: Cadherin-4 (913 aa).

Residues 1-20 form the signal peptide; sequence MTTGSVLPLLLLGLSGALRA. A propeptide spanning residues 21 to 166 is cleaved from the precursor; the sequence is HREDLTVREA…SSGGLRRQKR (146 aa). Asparagine 146 carries an N-linked (GlcNAc...) asparagine glycan. Cadherin domains lie at 167–274, 275–389, 390–504, 505–610, and 611–721; these read DWVI…RPEF, INQV…PPEF, TTST…APYF, PSNH…DNAP, and QLLP…TVGA. The Extracellular portion of the chain corresponds to 167 to 731; the sequence is DWVIPPINVP…VAAAGLGTGA (565 aa). N-linked (GlcNAc...) asparagine glycosylation is found at asparagine 280, asparagine 409, asparagine 554, asparagine 629, asparagine 658, and asparagine 699. Residues 732-753 form a helical membrane-spanning segment; the sequence is IVAILICIVILLIMVLLFVVWM. The Cytoplasmic segment spans residues 754–913; sequence KRREKERHTK…ADMYGGGEED (160 aa).

In terms of tissue distribution, distributed widely in mouse tissues with high levels present in brain, skeletal muscle and thymus.

The protein resides in the cell membrane. In terms of biological role, cadherins are calcium-dependent cell adhesion proteins. They preferentially interact with themselves in a homophilic manner in connecting cells; cadherins may thus contribute to the sorting of heterogeneous cell types. May play an important role in retinal development. The chain is Cadherin-4 (Cdh4) from Mus musculus (Mouse).